The primary structure comprises 161 residues: Immunity protein YezG (161 aa).

In terms of assembly, monomer. Interacts with the C-terminus of cognate toxin YeeF, probably with 2:2 stoichiometry. The second YezG molecules binds with lower affinity.

It is found in the cytoplasm. Its function is as follows. Immunity component of an LXG toxin-immunity module. These modules promote kin selection, mediate competition in biofilms, and drive spatial segregation of different strains, indicating that LXG toxins may help avoid warfare between strains in biofilms. Neutralizes the toxic abilities of cognate toxin YeeF upon expression in E.coli and in vitro. This chain is Immunity protein YezG, found in Bacillus spizizenii (strain ATCC 23059 / NRRL B-14472 / W23) (Bacillus subtilis subsp. spizizenii).